A 500-amino-acid chain; its full sequence is Cysteine--tRNA ligase (500 aa).

Zn(2+) is bound at residue Cys30. A 'HIGH' region motif is present at residues 32-42 (PTVYDYAHIGN). Residues Cys224, His263, and Glu267 each contribute to the Zn(2+) site. The short motif at 296 to 300 (KMSKS) is the 'KMSKS' region element. Lys299 is a binding site for ATP.

The protein belongs to the class-I aminoacyl-tRNA synthetase family. Monomer. It depends on Zn(2+) as a cofactor.

The protein resides in the cytoplasm. The enzyme catalyses tRNA(Cys) + L-cysteine + ATP = L-cysteinyl-tRNA(Cys) + AMP + diphosphate. The sequence is that of Cysteine--tRNA ligase from Bartonella bacilliformis (strain ATCC 35685 / KC583 / Herrer 020/F12,63).